The primary structure comprises 406 residues: Tryptophan 2,3-dioxygenase (406 aa).

Substrate-binding positions include 72-76 and R144; that span reads FIITH. H328 serves as a coordination point for heme. Residue T342 participates in substrate binding.

This sequence belongs to the tryptophan 2,3-dioxygenase family. In terms of assembly, homotetramer. Dimer of dimers. It depends on heme as a cofactor.

It carries out the reaction L-tryptophan + O2 = N-formyl-L-kynurenine. It functions in the pathway amino-acid degradation; L-tryptophan degradation via kynurenine pathway; L-kynurenine from L-tryptophan: step 1/2. Its function is as follows. Heme-dependent dioxygenase that catalyzes the oxidative cleavage of the L-tryptophan (L-Trp) pyrrole ring and converts L-tryptophan to N-formyl-L-kynurenine. Catalyzes the oxidative cleavage of the indole moiety. The sequence is that of Tryptophan 2,3-dioxygenase from Homo sapiens (Human).